Here is a 235-residue protein sequence, read N- to C-terminus: Geranylgeranylglyceryl phosphate synthase (235 aa).

Lys13 serves as a coordination point for sn-glycerol 1-phosphate. 2 residues coordinate Mg(2+): Asp15 and Thr42. Residues 162 to 167 (YVEYSG), Gly192, and 212 to 213 (GD) each bind sn-glycerol 1-phosphate.

The protein belongs to the GGGP/HepGP synthase family. Group I subfamily. Mg(2+) serves as cofactor.

It is found in the cytoplasm. The enzyme catalyses sn-glycerol 1-phosphate + (2E,6E,10E)-geranylgeranyl diphosphate = sn-3-O-(geranylgeranyl)glycerol 1-phosphate + diphosphate. Its pathway is membrane lipid metabolism; glycerophospholipid metabolism. Prenyltransferase that catalyzes the transfer of the geranylgeranyl moiety of geranylgeranyl diphosphate (GGPP) to the C3 hydroxyl of sn-glycerol-1-phosphate (G1P). This reaction is the first ether-bond-formation step in the biosynthesis of archaeal membrane lipids. The protein is Geranylgeranylglyceryl phosphate synthase of Natronomonas pharaonis (strain ATCC 35678 / DSM 2160 / CIP 103997 / JCM 8858 / NBRC 14720 / NCIMB 2260 / Gabara) (Halobacterium pharaonis).